A 159-amino-acid chain; its full sequence is Ribosomal RNA large subunit methyltransferase H (159 aa).

S-adenosyl-L-methionine-binding positions include Leu76, Gly108, and 127-132; that span reads FSKMTF.

This sequence belongs to the RNA methyltransferase RlmH family. In terms of assembly, homodimer.

Its subcellular location is the cytoplasm. It catalyses the reaction pseudouridine(1915) in 23S rRNA + S-adenosyl-L-methionine = N(3)-methylpseudouridine(1915) in 23S rRNA + S-adenosyl-L-homocysteine + H(+). Its function is as follows. Specifically methylates the pseudouridine at position 1915 (m3Psi1915) in 23S rRNA. This is Ribosomal RNA large subunit methyltransferase H from Clostridium botulinum (strain Eklund 17B / Type B).